Consider the following 91-residue polypeptide: Large ribosomal subunit protein bL28 (91 aa).

The tract at residues 1-23 (MSRVCELTGKGPMSGNNVSHANN) is disordered.

This sequence belongs to the bacterial ribosomal protein bL28 family.

The polypeptide is Large ribosomal subunit protein bL28 (Paracoccus denitrificans (strain Pd 1222)).